A 134-amino-acid chain; its full sequence is Small ribosomal subunit protein uS9 (134 aa).

The disordered stretch occupies residues 114–134; it reads EVERKKYGLKKARRAPQFSKR. Residues 120 to 134 show a composition bias toward basic residues; the sequence is YGLKKARRAPQFSKR.

Belongs to the universal ribosomal protein uS9 family.

The sequence is that of Small ribosomal subunit protein uS9 from Thermotoga neapolitana (strain ATCC 49049 / DSM 4359 / NBRC 107923 / NS-E).